A 251-amino-acid polypeptide reads, in one-letter code: Hydroxyacylglutathione hydrolase (251 aa).

Zn(2+) is bound by residues histidine 53, histidine 55, aspartate 57, histidine 58, histidine 110, aspartate 127, and histidine 165.

This sequence belongs to the metallo-beta-lactamase superfamily. Glyoxalase II family. As to quaternary structure, monomer. Zn(2+) is required as a cofactor.

It carries out the reaction an S-(2-hydroxyacyl)glutathione + H2O = a 2-hydroxy carboxylate + glutathione + H(+). The protein operates within secondary metabolite metabolism; methylglyoxal degradation; (R)-lactate from methylglyoxal: step 2/2. In terms of biological role, thiolesterase that catalyzes the hydrolysis of S-D-lactoyl-glutathione to form glutathione and D-lactic acid. The protein is Hydroxyacylglutathione hydrolase of Salmonella arizonae (strain ATCC BAA-731 / CDC346-86 / RSK2980).